The sequence spans 623 residues: UvrABC system protein C (623 aa).

The GIY-YIG domain maps to 21–100 (AEPGVYLMRD…IKTHQPPYNV (80 aa)). The UVR domain occupies 210–245 (DELIRELQEKMIQAAEQENYEAAARYRDQIRGLEQL).

It belongs to the UvrC family. In terms of assembly, interacts with UvrB in an incision complex.

It localises to the cytoplasm. Functionally, the UvrABC repair system catalyzes the recognition and processing of DNA lesions. UvrC both incises the 5' and 3' sides of the lesion. The N-terminal half is responsible for the 3' incision and the C-terminal half is responsible for the 5' incision. The sequence is that of UvrABC system protein C from Synechococcus sp. (strain JA-2-3B'a(2-13)) (Cyanobacteria bacterium Yellowstone B-Prime).